Reading from the N-terminus, the 105-residue chain is Large ribosomal subunit protein eL42 (105 aa).

A disordered region spans residues 23–61; that stretch reads KVTQYKKGKESKFAQGRRRYDRKQSGFGGQTKPIFRKKA.

Belongs to the eukaryotic ribosomal protein eL42 family.

This Caenorhabditis elegans protein is Large ribosomal subunit protein eL42.